We begin with the raw amino-acid sequence, 289 residues long: Protoheme IX farnesyltransferase (289 aa).

9 helical membrane passes run 9–29, 40–60, 89–109, 110–130, 134–154, 155–175, 190–209, 228–248, and 269–289; these read VALMKLRVVELLLITTVPVMM, LIAVTLVAGTLAAGSANTINC, LTFGIVIGIVSTLLFGFLVNW, PSALLADGAIAFYVFVYTLGL, TPSNIVIGGAAGCFPVLIGWS, AVTGTVGWAAVLLFAVVFFWT, YAAAGVPMLPVVASVQVVTR, VASTGPVYLVAAVAVGAWFLV, and FHMSITYLTLLFVAIAVTALV.

The protein belongs to the UbiA prenyltransferase family. Protoheme IX farnesyltransferase subfamily.

It is found in the cell membrane. It carries out the reaction heme b + (2E,6E)-farnesyl diphosphate + H2O = Fe(II)-heme o + diphosphate. The protein operates within porphyrin-containing compound metabolism; heme O biosynthesis; heme O from protoheme: step 1/1. Its function is as follows. Converts heme B (protoheme IX) to heme O by substitution of the vinyl group on carbon 2 of heme B porphyrin ring with a hydroxyethyl farnesyl side group. In Frankia casuarinae (strain DSM 45818 / CECT 9043 / HFP020203 / CcI3), this protein is Protoheme IX farnesyltransferase.